The chain runs to 131 residues: ATP synthase epsilon chain (131 aa).

It belongs to the ATPase epsilon chain family. F-type ATPases have 2 components, CF(1) - the catalytic core - and CF(0) - the membrane proton channel. CF(1) has five subunits: alpha(3), beta(3), gamma(1), delta(1), epsilon(1). CF(0) has three main subunits: a, b and c.

Its subcellular location is the cell inner membrane. Its function is as follows. Produces ATP from ADP in the presence of a proton gradient across the membrane. The polypeptide is ATP synthase epsilon chain (Helicobacter hepaticus (strain ATCC 51449 / 3B1)).